The chain runs to 447 residues: Probable glycine dehydrogenase (decarboxylating) subunit 1 (447 aa).

It belongs to the GcvP family. N-terminal subunit subfamily. The glycine cleavage system is composed of four proteins: P, T, L and H. In this organism, the P 'protein' is a heterodimer of two subunits.

It carries out the reaction N(6)-[(R)-lipoyl]-L-lysyl-[glycine-cleavage complex H protein] + glycine + H(+) = N(6)-[(R)-S(8)-aminomethyldihydrolipoyl]-L-lysyl-[glycine-cleavage complex H protein] + CO2. In terms of biological role, the glycine cleavage system catalyzes the degradation of glycine. The P protein binds the alpha-amino group of glycine through its pyridoxal phosphate cofactor; CO(2) is released and the remaining methylamine moiety is then transferred to the lipoamide cofactor of the H protein. The sequence is that of Probable glycine dehydrogenase (decarboxylating) subunit 1 from Sulfolobus acidocaldarius (strain ATCC 33909 / DSM 639 / JCM 8929 / NBRC 15157 / NCIMB 11770).